Reading from the N-terminus, the 181-residue chain is ADP-ribosylation factor 2 (181 aa).

The N-myristoyl glycine moiety is linked to residue Gly2. GTP contacts are provided by residues Gly24–Thr31, Asp67–Gln71, and Asn126–Asp129.

The protein belongs to the small GTPase superfamily. Arf family.

It localises to the golgi apparatus. Functionally, GTP-binding protein that functions as an allosteric activator of the cholera toxin catalytic subunit, an ADP-ribosyltransferase. Involved in protein trafficking; may modulate vesicle budding and uncoating within the Golgi apparatus. The sequence is that of ADP-ribosylation factor 2 (ARF2) from Bos taurus (Bovine).